The primary structure comprises 167 residues: SAR-endolysin (167 aa).

Residues 10-32 (SVMAAISGGAIAIASVLITGPGG) form a helical; Signal-anchor for type II membrane protein membrane-spanning segment. Residues E37 and D46 each act as proton donor/acceptor in the active site.

It belongs to the glycosyl hydrolase 24 family.

It localises to the host cell inner membrane. It carries out the reaction Hydrolysis of (1-&gt;4)-beta-linkages between N-acetylmuramic acid and N-acetyl-D-glucosamine residues in a peptidoglycan and between N-acetyl-D-glucosamine residues in chitodextrins.. Functionally, signal-arrest-release (SAR) endolysin with lysozyme activity that degrades host peptidoglycans and participates with the pinholin and spanin proteins in the sequential events which lead to programmed host cell lysis releasing the mature viral particles. Once the pinholin has permeabilized the host cell membrane, the SAR-endolysin is released into the periplasm where it breaks down the peptidoglycan layer. The chain is SAR-endolysin (19) from Bacteriophage PS119.